An 801-amino-acid chain; its full sequence is Cation/H(+) antiporter 28 (801 aa).

12 helical membrane-spanning segments follow: residues 24 to 44, 77 to 97, 113 to 133, 140 to 160, 179 to 199, 216 to 236, 252 to 272, 275 to 292, 304 to 324, 343 to 363, 371 to 391, and 403 to 423; these read ALKILVFIAIFVVRTLLHYLM, SITLNNIIEFGMICHMFVMGL, FIAYTSMITTFVLAFVTTPFL, PYIFSLALSLMASSTGSPILT, AAGVHTDMISTLLYCFGFIFF, LLMFCLFLAQVTFTSIVSPIF, GSHLVMSLAFVVLICSFPTWP, SMYNPILSAFTAGLFLPN, INYLLSTVFYPIFFFWVGFII, LLGTVIAGKVTGTVLCGLLLG, SLGLLLTTKGHFHVYLAALAI, and LIIFIIVFTVVYSPFVVMDII.

Belongs to the monovalent cation:proton antiporter 2 (CPA2) transporter (TC 2.A.37) family. CHX (TC 2.A.37.4) subfamily. Specifically expressed in pollen.

The protein resides in the membrane. In terms of biological role, may operate as a cation/H(+) antiporter. In Arabidopsis thaliana (Mouse-ear cress), this protein is Cation/H(+) antiporter 28 (CHX28).